The following is a 194-amino-acid chain: RNA polymerase II subunit A C-terminal domain phosphatase SSU72 like protein 3 (194 aa).

It belongs to the SSU72 phosphatase family.

Its subcellular location is the nucleus. The enzyme catalyses O-phospho-L-seryl-[protein] + H2O = L-seryl-[protein] + phosphate. It catalyses the reaction O-phospho-L-threonyl-[protein] + H2O = L-threonyl-[protein] + phosphate. In terms of biological role, protein phosphatase that catalyzes the dephosphorylation of the C-terminal domain of RNA polymerase II. Plays a role in RNA processing and termination. This is RNA polymerase II subunit A C-terminal domain phosphatase SSU72 like protein 3 from Homo sapiens (Human).